Here is a 183-residue protein sequence, read N- to C-terminus: Ribosome rescue factor SmrB (183 aa).

The Smr domain maps to 98 to 173 (LDLHGLTQLQ…GDAALLVLIE (76 aa)).

The protein belongs to the SmrB family. Associates with collided ribosomes, but not with correctly translating polysomes.

Its function is as follows. Acts as a ribosome collision sensor. Detects stalled/collided disomes (pairs of ribosomes where the leading ribosome is stalled and a second ribosome has collided with it) and endonucleolytically cleaves mRNA at the 5' boundary of the stalled ribosome. Stalled/collided disomes form a new interface (primarily via the 30S subunits) that binds SmrB. Cleaved mRNA becomes available for tmRNA ligation, leading to ribosomal subunit dissociation and rescue of stalled ribosomes. In Shigella boydii serotype 18 (strain CDC 3083-94 / BS512), this protein is Ribosome rescue factor SmrB.